A 577-amino-acid chain; its full sequence is MGTRLLALAPWLLLLLLQLAGASHVVHRSLEAEQAPSSVPASIVSPLLRTGYHFQPPMNWINDPNGPLYYKGWYHLFYQYNPKGAVWGNIVWAHSVSQDLINWIALEPAIKPDIPSDQYGCWSGSATILPDGTPAILYTGIDRPNINYQVQNIAFPKNASDPLLREWVKPAYNPVATPEPGMNATQFRDPTTAWYADGHWRMLVGGLKGARLGLAYLYRSRDFKTWVRAKHPLHSALTGMWECPDFFPLQAPGLQAGLDTSVPSSKYVLKNSLDLTRYDYYTVGIYNKVTERYVPDNPAGDYHRLRYDYGNFYASKTFFDPVKHRRILLGWANESDSVTYDKAKGWAGIHAIPRKVWLDPSGKQLLQWPIEELETLRGKSVSVFDKVVKPGEHFQVTGLGTYQADVEVSLEVSGLEKAEALDPAFGDDAERLCGAKGADVRGGVVFGLWVLASAGLEEKTAVFFRVFKPAGHGAKPVVLMCTDPTKSSLSPDLYKPTFAGFVDTDISSGKISLRSLIDRSVVESFGAGGKTCILSRVYPSMAIGDKAHLYVFNNGEADIKISHLKAWEMKKPLMNGA.

The N-terminal stretch at 1 to 22 (MGTRLLALAPWLLLLLLQLAGA) is a signal peptide. D63 is an active-site residue. N-linked (GlcNAc...) asparagine glycans are attached at residues N158, N183, and N333.

Belongs to the glycosyl hydrolase 32 family. In terms of tissue distribution, expressed in roots, leaves and flowers. Weakly expressed in seeds.

The protein localises to the secreted. The protein resides in the extracellular space. It is found in the apoplast. Its subcellular location is the cell wall. The enzyme catalyses Hydrolysis of terminal non-reducing beta-D-fructofuranoside residues in beta-D-fructofuranosides.. In terms of biological role, may play a role in sucrose partitioning during seed development and in stress response. The polypeptide is Beta-fructofuranosidase, insoluble isoenzyme 1 (CIN1) (Oryza sativa subsp. japonica (Rice)).